A 550-amino-acid polypeptide reads, in one-letter code: Beta-cubebene synthase (550 aa).

Residues Asp303, Asp307, Asp447, and Glu455 each contribute to the Mg(2+) site. Positions 303-307 (DDTYD) match the DDXXD motif motif.

It belongs to the terpene synthase family. Tpsa subfamily. The cofactor is Mg(2+). Expressed in young developing leaves and in stamens. Not detected in tepals and carpels.

The catalysed reaction is (2E,6E)-farnesyl diphosphate = beta-cubebene + diphosphate. It participates in secondary metabolite biosynthesis; terpenoid biosynthesis. Functionally, sesquiterpene synthase converting farnesyl diphosphate into beta-cubebene (24.5%), alpha-muurolene (19.3%), delta-cadinol (18.6%), delta-elemene (16.0%), tau-muurolene (10.8%), and beta-elemene (10.8%). No activity with geranyl diphosphate or geranylgeranyl diphosphate. The protein is Beta-cubebene synthase of Magnolia grandiflora (Southern magnolia).